Consider the following 120-residue polypeptide: Large ribosomal subunit protein uL22 (120 aa).

Positions 1 to 20 (MFVNRRYTARGKNLPSSPKK) are disordered.

It belongs to the universal ribosomal protein uL22 family. Part of the 50S ribosomal subunit.

In terms of biological role, this protein binds specifically to 23S rRNA; its binding is stimulated by other ribosomal proteins, e.g. L4, L17, and L20. It is important during the early stages of 50S assembly. It makes multiple contacts with different domains of the 23S rRNA in the assembled 50S subunit and ribosome. Functionally, the globular domain of the protein is located near the polypeptide exit tunnel on the outside of the subunit, while an extended beta-hairpin is found that lines the wall of the exit tunnel in the center of the 70S ribosome. The polypeptide is Large ribosomal subunit protein uL22 (Borrelia hermsii (strain HS1 / DAH)).